We begin with the raw amino-acid sequence, 776 residues long: MQPNSHIFVIITISSLIITVSAYGSTGTIAAAFGENGFFCAIDASGKQEVICWDRGNTNRSLNRPPGEISGYSPPMTSLSGGEGFLCAITSNTSRAFCWNLEDPSENLVPRAFQYNSYLQIASGNNHVCAISGLYYSGPDYGPVHCWEYSDNTNFTSGLLWNSSFHNPYIDSLMFRKIVSGDGFSCGVTKDGDLVCWGPKSNLLNFSNNEEFEVLASGRNSVCGVSKDSGQLHCFGDETEFGSLPNRPRFIALSAGANHYCGIREDDHGVECWGRNLNSSSSSSAPNTSGFVAISSSDSTTCGVRELDLVLDCWRVHDSSKADYSPPLELCSPGMCSPRGNCGDGWFAFNASILKESELTSLCSFHNLNICLRCGISCLEGYFPSSTCNPNADRVCTPCSLCQNSSCYGICKIRATKSKEHEQKEQREVRRLVIIIGCSVLGFLVMLIGLSFIPKMTKGSKRDDEERSKMTCCFCFDKNSVEADPDPVPHQSVLLPTAVSLGETKIFRLSELKDATHGFKEFNELGRGSFGFVYKAVLSDGIHVAVKRANAATIIHSNNRGFESELEILCKIRHNNIVNLLGYCSEMGERLLVYEYMPHGTLHDHLHGDLSQLDWSMRLKIMLQAARGLDYLHNEVDPPIIHRDVKTSNILLDGEMCARIADFGLVSSNERDSSNSDREGDVYDFGIVLLEILSGRKAIDRESDPAGIAEWAVPLIRKGKAAAIIDRNICLPRNVEPLLKLAELAELAVRENSNERPNIRNILCFLDLIVKSGLTF.

The signal sequence occupies residues 1-22; sequence MQPNSHIFVIITISSLIITVSA. Over 23–432 the chain is Extracellular; it reads YGSTGTIAAA…QKEQREVRRL (410 aa). Asn-59, Asn-92, Asn-154, Asn-162, Asn-205, Asn-278, Asn-287, and Asn-350 each carry an N-linked (GlcNAc...) asparagine glycan. Residues 341–396 form a TNFR-Cys repeat; the sequence is NCGDGWFAFNASILKESELTSLCSFHNLNICLRCGISCLEGYFPSSTCNPNADRVC. Intrachain disulfides connect Cys-342–Cys-371, Cys-374–Cys-388, and Cys-378–Cys-396. The N-linked (GlcNAc...) asparagine glycan is linked to Asn-404. Residues 433-453 form a helical membrane-spanning segment; the sequence is VIIIGCSVLGFLVMLIGLSFI. Residues 454-776 are Cytoplasmic-facing; sequence PKMTKGSKRD…DLIVKSGLTF (323 aa). One can recognise a Protein kinase domain in the interval 519-776; sequence FKEFNELGRG…DLIVKSGLTF (258 aa). ATP-binding positions include 525-533 and Lys-547; that span reads LGRGSFGFV. Catalysis depends on Asp-644, which acts as the Proton acceptor.

Belongs to the protein kinase superfamily. Ser/Thr protein kinase family. Homodimer. As to expression, expressed in roots, leaves, shoot apical meristems (SAM), and floral buds.

It is found in the membrane. It carries out the reaction L-seryl-[protein] + ATP = O-phospho-L-seryl-[protein] + ADP + H(+). It catalyses the reaction L-threonyl-[protein] + ATP = O-phospho-L-threonyl-[protein] + ADP + H(+). Its function is as follows. Serine/threonine-protein kinase with low activity. The polypeptide is Serine/threonine-protein kinase-like protein CCR2 (CCR2) (Arabidopsis thaliana (Mouse-ear cress)).